A 298-amino-acid polypeptide reads, in one-letter code: Serine/threonine-protein kinase 1 (298 aa).

Residues phenylalanine 38–phenylalanine 276 form the Protein kinase domain. Residues phenylalanine 45–phenylalanine 53 and lysine 65 contribute to the ATP site. The active-site Proton acceptor is the aspartate 152.

Belongs to the protein kinase superfamily. Ser/Thr protein kinase family.

It is found in the virion. It localises to the host cytoplasm. The catalysed reaction is L-seryl-[protein] + ATP = O-phospho-L-seryl-[protein] + ADP + H(+). It carries out the reaction L-threonyl-[protein] + ATP = O-phospho-L-threonyl-[protein] + ADP + H(+). In terms of biological role, essential for viral replication. It may mediate the virus' progression through DNA replication. In Ornithodoros (relapsing fever ticks), this protein is Serine/threonine-protein kinase 1.